Here is a 227-residue protein sequence, read N- to C-terminus: 7-cyano-7-deazaguanine synthase (227 aa).

11–21 contacts ATP; that stretch reads VSGGMDSAALL. C192, C200, C203, and C206 together coordinate Zn(2+).

This sequence belongs to the QueC family. Zn(2+) serves as cofactor.

It catalyses the reaction 7-carboxy-7-deazaguanine + NH4(+) + ATP = 7-cyano-7-deazaguanine + ADP + phosphate + H2O + H(+). The protein operates within purine metabolism; 7-cyano-7-deazaguanine biosynthesis. Functionally, catalyzes the ATP-dependent conversion of 7-carboxy-7-deazaguanine (CDG) to 7-cyano-7-deazaguanine (preQ(0)). The protein is 7-cyano-7-deazaguanine synthase of Persephonella marina (strain DSM 14350 / EX-H1).